The chain runs to 466 residues: 23S rRNA (uracil(1939)-C(5))-methyltransferase RlmD (466 aa).

In terms of domain architecture, TRAM spans 1-54; that stretch reads MVDVLNIESLDLEARGIAHRDGKVLFVEGALPGERVTVQTVRRKPSYEIAKVEE. 4 residues coordinate [4Fe-4S] cluster: Cys-67, Cys-73, Cys-76, and Cys-155. 6 residues coordinate S-adenosyl-L-methionine: Gln-264, Phe-293, Asn-298, Glu-314, Asn-342, and Asp-363. The active-site Nucleophile is the Cys-393.

Belongs to the class I-like SAM-binding methyltransferase superfamily. RNA M5U methyltransferase family. RlmD subfamily.

The catalysed reaction is uridine(1939) in 23S rRNA + S-adenosyl-L-methionine = 5-methyluridine(1939) in 23S rRNA + S-adenosyl-L-homocysteine + H(+). Functionally, catalyzes the formation of 5-methyl-uridine at position 1939 (m5U1939) in 23S rRNA. The sequence is that of 23S rRNA (uracil(1939)-C(5))-methyltransferase RlmD from Bordetella pertussis (strain Tohama I / ATCC BAA-589 / NCTC 13251).